A 237-amino-acid chain; its full sequence is Probable glutathione-independent glyoxalase SNO4 (237 aa).

Residues Cys-138, His-139, and Glu-170 contribute to the active site.

It belongs to the peptidase C56 family. HSP31-like subfamily. Homodimer.

The protein resides in the cytoplasm. The protein localises to the P-body. It catalyses the reaction methylglyoxal + H2O = (R)-lactate + H(+). Catalyzes the conversion of methylglyoxal (MG) to D-lactate in a single glutathione (GSH)-independent step. May play a role in detoxifying endogenously produced glyoxals. Involved in protection against reactive oxygen species (ROS). Important for viability in stationary phase. May negatively regulate TORC1 in response to nutrient limitation. This is Probable glutathione-independent glyoxalase SNO4 from Saccharomyces cerevisiae (strain ATCC 204508 / S288c) (Baker's yeast).